The primary structure comprises 320 residues: Ino eighty subunit 2 (320 aa).

Acidic residues-rich tracts occupy residues 1–12 (MDSEASDIEAEL) and 22–35 (EYIDDDDYTEDIDD). Disordered stretches follow at residues 1–232 (MDSE…SKKK) and 244–306 (ENAR…EGMT). A compositionally biased stretch (basic residues) spans 42 to 59 (SSRRTARRSVPKGVRTSK). Position 67 is a phosphoserine (S67). The segment covering 68 to 80 (VEVDEDYDEEEDV) has biased composition (acidic residues). The span at 105 to 116 (EKSDIGDSKGND) shows a compositional bias: basic and acidic residues. Over residues 117 to 130 (GEIEDGILEEEESL) the composition is skewed to acidic residues. At S129 the chain carries Phosphoserine. The span at 131-147 (EKELNRGGGKEVEKSEE) shows a compositional bias: basic and acidic residues. A compositionally biased stretch (acidic residues) spans 161–174 (EEQDGESGGYEDNE). Over residues 207–217 (TDSTRSTTTRS) the composition is skewed to low complexity. The span at 244 to 264 (ENARKRKNLSEKRLEEEKQDT) shows a compositional bias: basic and acidic residues. A compositionally biased stretch (basic residues) spans 268–278 (LLKKRAGKSRS).

The protein belongs to the IES2 family. In terms of assembly, component of the chromatin-remodeling INO80 complex, at least composed of ARP4, ARP5, ARP8, RVB1, RVB2, TAF14, NHP10, IES1, IES3, IES4, IES6, ACT1, IES2, IES5 and INO80.

The protein localises to the nucleus. In terms of biological role, component of the INO80 complex which remodels chromatin by shifting nucleosomes and is involved in DNA repair. The protein is Ino eighty subunit 2 (IES2) of Saccharomyces cerevisiae (strain ATCC 204508 / S288c) (Baker's yeast).